Reading from the N-terminus, the 1480-residue chain is Cystic fibrosis transmembrane conductance regulator (1480 aa).

Residues 1 to 77 (MQRSPLEKAS…KLINALRRCF (77 aa)) are Cytoplasmic-facing. A helical transmembrane segment spans residues 78-98 (FWRFMFYGIFLYLGEVTKAVQ). In terms of domain architecture, ABC transmembrane type-1 1 spans 81–365 (FMFYGIFLYL…WAVQTWYDSL (285 aa)). Residues 99–122 (PLLLGRIIASYDPDNKEERSIAIY) are Extracellular-facing. A helical membrane pass occupies residues 123–146 (LGIGLCLLFIVRTLLLHPAIFGLH). At 147–195 (HIGMQMRIAMFSLIYKKTLKLSSRVLDKISIGQLVSLLSNNLNKFDEGL) the chain is on the cytoplasmic side. The chain crosses the membrane as a helical span at residues 196-216 (ALAHFVWIAPLQVALLMGLIW). At 217–222 (ELLQAS) the chain is on the extracellular side. The chain crosses the membrane as a helical span at residues 223–243 (AFCGLGFLIVLALFQAGLGRM). Over 244–298 (MMKYRDQRAGKISERLVITSEMIENIQSVKAYCWEEAMEKMIENLRQTELKLTRK) the chain is Cytoplasmic. The chain crosses the membrane as a helical span at residues 299 to 319 (AAYVRYFNSSAFFFSGFFVVF). Topologically, residues 320–339 (LSVLPYALIKGIILRKIFTT) are extracellular. A helical transmembrane segment spans residues 340–358 (ISFCIVLRMAVTRQFPWAV). Residues 359 to 858 (QTWYDSLGAI…YLRYITVHKS (500 aa)) lie on the Cytoplasmic side of the membrane. ATP contacts are provided by residues Trp-401, Ser-434, 458 to 465 (GSTGAGKT), and Gln-493. An ABC transporter 1 domain is found at 423–646 (NGDDSLFFSN…RPDFSSKLMG (224 aa)). Cys-524 carries the S-palmitoyl cysteine lipid modification. Phosphoserine is present on residues Ser-549 and Ser-660. The disordered R region stretch occupies residues 654–831 (SAERRNSILT…EEINEEDLKE (178 aa)). Ser-670 carries the phosphoserine; by PKA modification. Ser-686 carries the post-translational modification Phosphoserine. Residue Lys-688 forms a Glycyl lysine isopeptide (Lys-Gly) (interchain with G-Cter in ubiquitin) linkage. Residues Ser-700 and Ser-712 each carry the phosphoserine modification. The residue at position 717 (Thr-717) is a Phosphothreonine. Ser-737, Ser-753, Ser-768, Ser-790, Ser-795, and Ser-813 each carry phosphoserine. The chain crosses the membrane as a helical span at residues 859–879 (LIFVLIWCLVIFLAEVAASLV). Residues 859–1155 (LIFVLIWCLV…AVNSSIDVDS (297 aa)) form the ABC transmembrane type-1 2 domain. At 880 to 918 (VLWLLGNTPLQDKGNSTHSRNNSYAVIITSTSSYYVFYI) the chain is on the extracellular side. N-linked (GlcNAc...) asparagine glycosylation is found at Asn-894 and Asn-900. A discontinuously helical membrane pass occupies residues 919-939 (YVGVADTLLAMGFFRGLPLVH). Residues 940–990 (TLITVSKILHHKMLHSVLQAPMSTLNTLKAGGILNRFSKDIAILDDLLPLT) lie on the Cytoplasmic side of the membrane. A helical membrane pass occupies residues 991-1011 (IFDFIQLLLIVIGAIAVVAVL). Residues 1012 to 1013 (QP) are Extracellular-facing. Residues 1014 to 1034 (YIFVATVPVIVAFIMLRAYFL) traverse the membrane as a helical segment. The Cytoplasmic segment spans residues 1035-1095 (QTSQQLKQLE…TANWFLYLST (61 aa)). Residues 1096–1116 (LRWFQMRIEMIFVIFFIAVTF) traverse the membrane as a helical segment. Over 1117–1130 (ISILTTGEGEGRVG) the chain is Extracellular. The chain crosses the membrane as a helical span at residues 1131–1151 (IILTLAMNIMSTLQWAVNSSI). Topologically, residues 1152 to 1480 (DVDSLMRSVS…TEEEVQDTRL (329 aa)) are cytoplasmic. Residues 1210 to 1443 (MTVKDLTAKY…RSLFRQAISP (234 aa)) form the ABC transporter 2 domain. ATP-binding positions include Tyr-1219 and 1244 to 1251 (GRTGSGKS). The tract at residues 1386-1480 (RTLKQAFADC…TEEEVQDTRL (95 aa)) is interaction with GORASP2. Cys-1395 carries the S-palmitoyl cysteine lipid modification. Phosphoserine occurs at positions 1444 and 1456. The segment at 1452 to 1480 (HRNSSKCKSKPQIAALKEETEEEVQDTRL) is disordered. Acidic residues predominate over residues 1470-1480 (ETEEEVQDTRL). Positions 1478–1480 (TRL) match the PDZ-binding motif.

Belongs to the ABC transporter superfamily. ABCC family. CFTR transporter (TC 3.A.1.202) subfamily. Monomer; does not require oligomerization for channel activity. May form oligomers in the membrane. Interacts with SLC26A3, SLC26A6 and NHERF1. Interacts with SHANK2. Interacts with MYO6. Interacts (via C-terminus) with GOPC (via PDZ domain); this promotes CFTR internalization and thereby decreases channel activity. Interacts with SLC4A7 through NHERF1. Found in a complex with MYO5B and RAB11A. Interacts with ANO1. Interacts with SLC26A8. Interacts with AHCYL1; the interaction increases CFTR activity. Interacts with CSE1L. The core-glycosylated form interacts with GORASP2 (via PDZ GRASP-type 1 domain) in respone to ER stress. Interacts with MARCHF2; the interaction leads to CFTR ubiqtuitination and degradation. Interacts with ADGRG2. Post-translationally, N-glycosylated. In terms of processing, phosphorylated; cAMP treatment promotes phosphorylation and activates the channel. Dephosphorylation decreases the ATPase activity (in vitro). Phosphorylation at PKA sites activates the channel. Phosphorylation at PKC sites enhances the response to phosphorylation by PKA. Phosphorylated by AMPK; this inhibits channel activity. Ubiquitinated, leading to its degradation in the lysosome. Deubiquitination by USP10 in early endosomes enhances its endocytic recycling to the cell membrane. Ubiquitinated by RNF185 during ER stress. Ubiquitinated by MARCHF2.

Its subcellular location is the apical cell membrane. It localises to the early endosome membrane. It is found in the cell membrane. The protein localises to the recycling endosome membrane. The protein resides in the endoplasmic reticulum membrane. Its subcellular location is the nucleus. It catalyses the reaction ATP + H2O + closed Cl(-) channel = ADP + phosphate + open Cl(-) channel.. The enzyme catalyses chloride(in) = chloride(out). It carries out the reaction hydrogencarbonate(in) = hydrogencarbonate(out). The catalysed reaction is ATP + H2O = ADP + phosphate + H(+). Its function is as follows. Epithelial ion channel that plays an important role in the regulation of epithelial ion and water transport and fluid homeostasis. Mediates the transport of chloride ions across the cell membrane. Possesses an intrinsic ATPase activity and utilizes ATP to gate its channel; the passive flow of anions through the channel is gated by cycles of ATP binding and hydrolysis by the ATP-binding domains. The ion channel is also permeable to HCO(3)(-); selectivity depends on the extracellular chloride concentration. Exerts its function also by modulating the activity of other ion channels and transporters. Contributes to the regulation of the pH and the ion content of the epithelial fluid layer. Modulates the activity of the epithelial sodium channel (ENaC) complex, in part by regulating the cell surface expression of the ENaC complex. May regulate bicarbonate secretion and salvage in epithelial cells by regulating the transporter SLC4A7. Can inhibit the chloride channel activity of ANO1. Plays a role in the chloride and bicarbonate homeostasis during sperm epididymal maturation and capacitation. This is Cystic fibrosis transmembrane conductance regulator from Pan troglodytes (Chimpanzee).